A 512-amino-acid polypeptide reads, in one-letter code: Cytochrome P450 1A1 (512 aa).

The interval 29–40 is mitochondrial targeting signal; sequence SRPQVPKGLKNP. Residue Ser67 is glycosylated (O-linked (GlcNAc) serine). Residue Phe224 participates in substrate binding. Cys457 is a heme binding site.

It belongs to the cytochrome P450 family. Interacts with cytosolic chaperones HSP70 and HSP90; this interaction is required for initial targeting to mitochondria. Interacts (via mitochondrial targeting signal) with TOMM40 (via N-terminus); this interaction is required for translocation across the mitochondrial outer membrane. Heme is required as a cofactor. Lung, lymphocytes and placenta.

Its subcellular location is the endoplasmic reticulum membrane. It is found in the mitochondrion inner membrane. The protein localises to the microsome membrane. It localises to the cytoplasm. It catalyses the reaction an organic molecule + reduced [NADPH--hemoprotein reductase] + O2 = an alcohol + oxidized [NADPH--hemoprotein reductase] + H2O + H(+). The enzyme catalyses estrone + reduced [NADPH--hemoprotein reductase] + O2 = 2-hydroxyestrone + oxidized [NADPH--hemoprotein reductase] + H2O + H(+). The catalysed reaction is estrone + reduced [NADPH--hemoprotein reductase] + O2 = 4-hydroxyestrone + oxidized [NADPH--hemoprotein reductase] + H2O + H(+). It carries out the reaction estrone + reduced [NADPH--hemoprotein reductase] + O2 = 6alpha-hydroxyestrone + oxidized [NADPH--hemoprotein reductase] + H2O + H(+). It catalyses the reaction estrone + reduced [NADPH--hemoprotein reductase] + O2 = 15alpha-hydroxyestrone + oxidized [NADPH--hemoprotein reductase] + H2O + H(+). The enzyme catalyses estrone + reduced [NADPH--hemoprotein reductase] + O2 = 16alpha-hydroxyestrone + oxidized [NADPH--hemoprotein reductase] + H2O + H(+). The catalysed reaction is 17beta-estradiol + reduced [NADPH--hemoprotein reductase] + O2 = 2-hydroxy-17beta-estradiol + oxidized [NADPH--hemoprotein reductase] + H2O + H(+). It carries out the reaction 17beta-estradiol + reduced [NADPH--hemoprotein reductase] + O2 = 4-hydroxy-17beta-estradiol + oxidized [NADPH--hemoprotein reductase] + H2O + H(+). It catalyses the reaction 17beta-estradiol + reduced [NADPH--hemoprotein reductase] + O2 = 6alpha-hydroxy-17beta-estradiol + oxidized [NADPH--hemoprotein reductase] + H2O + H(+). The enzyme catalyses 17beta-estradiol + reduced [NADPH--hemoprotein reductase] + O2 = 7alpha-hydroxy-17beta-estradiol + oxidized [NADPH--hemoprotein reductase] + H2O + H(+). The catalysed reaction is 17beta-estradiol + reduced [NADPH--hemoprotein reductase] + O2 = 15alpha-hydroxy-17beta-estradiol + oxidized [NADPH--hemoprotein reductase] + H2O + H(+). It carries out the reaction (5Z,8Z,11Z)-eicosatrienoate + reduced [NADPH--hemoprotein reductase] + O2 = 19-hydroxy-(5Z,8Z,11Z)-eicosatrienoate + oxidized [NADPH--hemoprotein reductase] + H2O + H(+). It catalyses the reaction (5Z,8Z,11Z,14Z)-eicosatetraenoate + reduced [NADPH--hemoprotein reductase] + O2 = 16-hydroxy-(5Z,8Z,11Z,14Z)-eicosatetraenoate + oxidized [NADPH--hemoprotein reductase] + H2O + H(+). The enzyme catalyses (5Z,8Z,11Z,14Z)-eicosatetraenoate + reduced [NADPH--hemoprotein reductase] + O2 = 17-hydroxy-(5Z,8Z,11Z,14Z)-eicosatetraenoate + oxidized [NADPH--hemoprotein reductase] + H2O + H(+). The catalysed reaction is (5Z,8Z,11Z,14Z)-eicosatetraenoate + reduced [NADPH--hemoprotein reductase] + O2 = 18-hydroxy-(5Z,8Z,11Z,14Z)-eicosatetraenoate + oxidized [NADPH--hemoprotein reductase] + H2O + H(+). It carries out the reaction (5Z,8Z,11Z,14Z)-eicosatetraenoate + reduced [NADPH--hemoprotein reductase] + O2 = 19-hydroxy-(5Z,8Z,11Z,14Z)-eicosatetraenoate + oxidized [NADPH--hemoprotein reductase] + H2O + H(+). It catalyses the reaction (5Z,8Z,11Z,14Z,17Z)-eicosapentaenoate + reduced [NADPH--hemoprotein reductase] + O2 = 19-hydroxy-(5Z,8Z,11Z,14Z,17Z)-eicosapentaenoate + oxidized [NADPH--hemoprotein reductase] + H2O + H(+). The enzyme catalyses (5Z,8Z,11Z,14Z)-eicosatetraenoate + reduced [NADPH--hemoprotein reductase] + O2 = (8R,9S)-epoxy-(5Z,11Z,14Z)-eicosatrienoate + oxidized [NADPH--hemoprotein reductase] + H2O + H(+). The catalysed reaction is (5Z,8Z,11Z,14Z)-eicosatetraenoate + reduced [NADPH--hemoprotein reductase] + O2 = (11R,12S)-epoxy-(5Z,8Z,14Z)-eicosatrienoate + oxidized [NADPH--hemoprotein reductase] + H2O + H(+). It carries out the reaction (5Z,8Z,11Z,14Z)-eicosatetraenoate + reduced [NADPH--hemoprotein reductase] + O2 = (14S,15R)-epoxy-(5Z,8Z,11Z)-eicosatrienoate + oxidized [NADPH--hemoprotein reductase] + H2O + H(+). It catalyses the reaction (5Z,8Z,11Z,14Z)-eicosatetraenoate + reduced [NADPH--hemoprotein reductase] + O2 = (14R,15S)-epoxy-(5Z,8Z,11Z)-eicosatrienoate + oxidized [NADPH--hemoprotein reductase] + H2O + H(+). The enzyme catalyses (5Z,8Z,11Z,14Z,17Z)-eicosapentaenoate + reduced [NADPH--hemoprotein reductase] + O2 = (17R,18S)-epoxy-(5Z,8Z,11Z,14Z)-eicosatetraenoate + oxidized [NADPH--hemoprotein reductase] + H2O + H(+). The catalysed reaction is (4Z,7Z,10Z,13Z,16Z,19Z)-docosahexaenoate + reduced [NADPH--hemoprotein reductase] + O2 = (19S,20R)-epoxy-(4Z,7Z,10Z,13Z,16Z)-docosapentaenoate + oxidized [NADPH--hemoprotein reductase] + H2O + H(+). It carries out the reaction (4Z,7Z,10Z,13Z,16Z,19Z)-docosahexaenoate + reduced [NADPH--hemoprotein reductase] + O2 = (19R,20S)-epoxy-(4Z,7Z,10Z,13Z,16Z)-docosapentaenoate + oxidized [NADPH--hemoprotein reductase] + H2O + H(+). It catalyses the reaction all-trans-retinol + reduced [NADPH--hemoprotein reductase] + O2 = all-trans-retinal + oxidized [NADPH--hemoprotein reductase] + 2 H2O + H(+). The enzyme catalyses all-trans-retinal + reduced [NADPH--hemoprotein reductase] + O2 = all-trans-retinoate + oxidized [NADPH--hemoprotein reductase] + H2O + 2 H(+). The catalysed reaction is (13S)-hydroperoxy-(9Z,11E)-octadecadienoate = 13-oxo-(9Z,11E)-octadecadienoate + H2O. It carries out the reaction (12S)-hydroperoxy-(5Z,8Z,10E,14Z)-eicosatetraenoate = 12-oxo-(5Z,8Z,10E,14Z)-eicosatetraenoate + H2O. It catalyses the reaction (15S)-hydroperoxy-(5Z,8Z,11Z,13E)-eicosatetraenoate = 15-oxo-(5Z,8Z,11Z,13E)-eicosatetraenoate + H2O. The enzyme catalyses (5S)-hydroperoxy-(6E,8Z,11Z,14Z)-eicosatetraenoate = 5-oxo-(6E,8Z,11Z,14Z)-eicosatetraenoate + H2O. The protein operates within steroid hormone biosynthesis. It functions in the pathway lipid metabolism; fatty acid metabolism. It participates in cofactor metabolism; retinol metabolism. Its function is as follows. A cytochrome P450 monooxygenase involved in the metabolism of various endogenous substrates, including fatty acids, steroid hormones and vitamins. Mechanistically, uses molecular oxygen inserting one oxygen atom into a substrate, and reducing the second into a water molecule, with two electrons provided by NADPH via cytochrome P450 reductase (NADPH--hemoprotein reductase). Catalyzes the hydroxylation of carbon-hydrogen bonds. Exhibits high catalytic activity for the formation of hydroxyestrogens from estrone (E1) and 17beta-estradiol (E2), namely 2-hydroxy E1 and E2, as well as D-ring hydroxylated E1 and E2 at the C15-alpha and C16-alpha positions. Displays different regioselectivities for polyunsaturated fatty acids (PUFA) hydroxylation. Catalyzes the epoxidation of double bonds of certain PUFA. Converts arachidonic acid toward epoxyeicosatrienoic acid (EET) regioisomers, 8,9-, 11,12-, and 14,15-EET, that function as lipid mediators in the vascular system. Displays an absolute stereoselectivity in the epoxidation of eicosapentaenoic acid (EPA) producing the 17(R),18(S) enantiomer. May play an important role in all-trans retinoic acid biosynthesis in extrahepatic tissues. Catalyzes two successive oxidative transformation of all-trans retinol to all-trans retinal and then to the active form all-trans retinoic acid. May also participate in eicosanoids metabolism by converting hydroperoxide species into oxo metabolites (lipoxygenase-like reaction, NADPH-independent). The polypeptide is Cytochrome P450 1A1 (Homo sapiens (Human)).